The following is a 529-amino-acid chain: Phosphoenolpyruvate carboxykinase (ATP) (529 aa).

Arginine 52 contacts substrate. Residues arginine 130, asparagine 131, and phenylalanine 133 each coordinate Ca(2+). Residues tyrosine 191 and lysine 197 each coordinate substrate. ATP is bound by residues lysine 197, histidine 216, and 232-240 (GLSGTGKTT). Positions 197 and 216 each coordinate Mn(2+). Aspartate 253 lines the Mn(2+) pocket. Glycine 267 serves as a coordination point for Ca(2+). Residues glutamate 281, arginine 319, 438–439 (RF), phenylalanine 439, and threonine 444 contribute to the ATP site. Arginine 319 serves as a coordination point for substrate.

The protein belongs to the phosphoenolpyruvate carboxykinase (ATP) family. In terms of assembly, dimer of dimers. Mn(2+) is required as a cofactor.

It is found in the cytoplasm. The catalysed reaction is oxaloacetate + ATP = phosphoenolpyruvate + ADP + CO2. It functions in the pathway carbohydrate biosynthesis; gluconeogenesis. Allosterically activated by calcium. Involved in gluconeogenesis. Catalyzes the conversion of oxaloacetate (OAA) to phosphoenolpyruvate (PEP) through direct phosphoryl transfer between the nucleoside triphosphate and OAA. The protein is Phosphoenolpyruvate carboxykinase (ATP) of Thermus thermophilus (strain ATCC 27634 / DSM 579 / HB8).